The primary structure comprises 254 residues: 5-keto-D-gluconate 5-reductase (254 aa).

13–37 (LITGSAQGIGFLLATGLGKYGAQII) is a binding site for NADP(+). Serine 145 serves as a coordination point for substrate. Tyrosine 158 acts as the Proton acceptor in catalysis.

Belongs to the short-chain dehydrogenases/reductases (SDR) family.

The catalysed reaction is D-gluconate + NAD(+) = 5-dehydro-D-gluconate + NADH + H(+). It carries out the reaction D-gluconate + NADP(+) = 5-dehydro-D-gluconate + NADPH + H(+). The protein operates within carbohydrate acid metabolism; L-idonate degradation. Functionally, catalyzes the reduction of 5-keto-D-gluconate to D-gluconate, using either NADH or NADPH. Is likely involved in an L-idonate degradation pathway that allows E.coli to utilize L-idonate as the sole carbon and energy source. Is also able to catalyze the reverse reaction in vitro, but the D-gluconate oxidation by the enzyme can only proceed with NAD. The polypeptide is 5-keto-D-gluconate 5-reductase (Escherichia coli O6:H1 (strain CFT073 / ATCC 700928 / UPEC)).